Here is a 92-residue protein sequence, read N- to C-terminus: Small ribosomal subunit protein bS20 (92 aa).

The interval methionine 1 to alanine 23 is disordered.

It belongs to the bacterial ribosomal protein bS20 family.

Its function is as follows. Binds directly to 16S ribosomal RNA. The protein is Small ribosomal subunit protein bS20 of Rhizobium etli (strain CIAT 652).